A 367-amino-acid polypeptide reads, in one-letter code: Beta sliding clamp (367 aa).

This sequence belongs to the beta sliding clamp family. Forms a ring-shaped head-to-tail homodimer around DNA which binds and tethers DNA polymerases and other proteins to the DNA. The DNA replisome complex has a single clamp-loading complex (3 tau and 1 each of delta, delta', psi and chi subunits) which binds 3 Pol III cores (1 core on the leading strand and 2 on the lagging strand) each with a beta sliding clamp dimer. Additional proteins in the replisome are other copies of gamma, psi and chi, Ssb, DNA helicase and RNA primase.

The protein resides in the cytoplasm. Its function is as follows. Confers DNA tethering and processivity to DNA polymerases and other proteins. Acts as a clamp, forming a ring around DNA (a reaction catalyzed by the clamp-loading complex) which diffuses in an ATP-independent manner freely and bidirectionally along dsDNA. Initially characterized for its ability to contact the catalytic subunit of DNA polymerase III (Pol III), a complex, multichain enzyme responsible for most of the replicative synthesis in bacteria; Pol III exhibits 3'-5' exonuclease proofreading activity. The beta chain is required for initiation of replication as well as for processivity of DNA replication. In Pseudomonas putida (strain ATCC 47054 / DSM 6125 / CFBP 8728 / NCIMB 11950 / KT2440), this protein is Beta sliding clamp (dnaN).